A 131-amino-acid polypeptide reads, in one-letter code: Glycine cleavage system H protein (131 aa).

The Lipoyl-binding domain occupies Thr24 to Glu106. Residue Lys65 is modified to N6-lipoyllysine.

This sequence belongs to the GcvH family. As to quaternary structure, the glycine cleavage system is composed of four proteins: P, T, L and H. The cofactor is (R)-lipoate.

Its function is as follows. The glycine cleavage system catalyzes the degradation of glycine. The H protein shuttles the methylamine group of glycine from the P protein to the T protein. The polypeptide is Glycine cleavage system H protein (Mycobacteroides abscessus (strain ATCC 19977 / DSM 44196 / CCUG 20993 / CIP 104536 / JCM 13569 / NCTC 13031 / TMC 1543 / L948) (Mycobacterium abscessus)).